The sequence spans 258 residues: Indole-3-glycerol phosphate synthase (258 aa).

Belongs to the TrpC family.

It carries out the reaction 1-(2-carboxyphenylamino)-1-deoxy-D-ribulose 5-phosphate + H(+) = (1S,2R)-1-C-(indol-3-yl)glycerol 3-phosphate + CO2 + H2O. The protein operates within amino-acid biosynthesis; L-tryptophan biosynthesis; L-tryptophan from chorismate: step 4/5. This is Indole-3-glycerol phosphate synthase from Geobacillus sp. (strain WCH70).